We begin with the raw amino-acid sequence, 518 residues long: 2-isopropylmalate synthase (518 aa).

A Pyruvate carboxyltransferase domain is found at 4 to 266 (INVFDTTLRD…DSSLNLHELK (263 aa)). 4 residues coordinate Mn(2+): Asp13, His201, His203, and Asn237. The segment at 391–518 (EFLSLQVHYG…GLKRQTAVGS (128 aa)) is regulatory domain.

It belongs to the alpha-IPM synthase/homocitrate synthase family. LeuA type 1 subfamily. As to quaternary structure, homodimer. It depends on Mn(2+) as a cofactor.

It is found in the cytoplasm. The catalysed reaction is 3-methyl-2-oxobutanoate + acetyl-CoA + H2O = (2S)-2-isopropylmalate + CoA + H(+). Its pathway is amino-acid biosynthesis; L-leucine biosynthesis; L-leucine from 3-methyl-2-oxobutanoate: step 1/4. Catalyzes the condensation of the acetyl group of acetyl-CoA with 3-methyl-2-oxobutanoate (2-ketoisovalerate) to form 3-carboxy-3-hydroxy-4-methylpentanoate (2-isopropylmalate). The protein is 2-isopropylmalate synthase of Bacillus velezensis (strain DSM 23117 / BGSC 10A6 / LMG 26770 / FZB42) (Bacillus amyloliquefaciens subsp. plantarum).